Reading from the N-terminus, the 185-residue chain is Ribosome-recycling factor (185 aa).

This sequence belongs to the RRF family.

The protein localises to the cytoplasm. Its function is as follows. Responsible for the release of ribosomes from messenger RNA at the termination of protein biosynthesis. May increase the efficiency of translation by recycling ribosomes from one round of translation to another. The polypeptide is Ribosome-recycling factor (Exiguobacterium sibiricum (strain DSM 17290 / CCUG 55495 / CIP 109462 / JCM 13490 / 255-15)).